A 1843-amino-acid polypeptide reads, in one-letter code: Cilia- and flagella-associated protein 44 (1843 aa).

Residues 1–86 are disordered; that stretch reads MKEPDDQDTS…PPVEVKEEPE (86 aa). Polar residues predominate over residues 29-39; it reads LKSSQDTTADS. The span at 41-58 shows a compositional bias: acidic residues; sequence TDGEESYLGDDLDLDDMD. 7 WD repeats span residues 214 to 255, 258 to 297, 308 to 346, 353 to 390, 456 to 495, 497 to 541, and 561 to 600; these read GAEK…PILR, AFSQDVFKVTFNPDNDEQLTTSGSGHIKFWEMAFTFTGLK, TSTSDIEGYAELPDGKVLSGSEWGNLLLWEGSLIKVELC, CHSGSINQIMLDEGEVITAGSDGSVRIWDFETIDTADV, FHSGPIAALAVSPLTYLMATTAMDCSVRVYDFSSKNPLVH, KFKQ…GLTV, and PHTDEVTALAYERDGDILATGSEDKTVFFFDVEKEYKPIG. Residues 701–726 are disordered; that stretch reads REAFGEEEIPEEETSEEGEEEEPPLP. Positions 705–724 are enriched in acidic residues; sequence GEEEIPEEETSEEGEEEEPP. 2 WD repeats span residues 790-829 and 842-881; these read TEDNPIRNITFSNDQTMMFCGMTNGAIRVYVLSENDPFLV and NNYGSIKSITSSFDDQYLLTAGEDGNIFVFDIFSEFIVPK. Disordered regions lie at residues 1040–1086, 1266–1291, and 1488–1524; these read YSKL…SVLE, QRKQKKRQDKSSSKQSGTGSGGSAGG, and KEVEGDADEDEESEESSEEESSLESDEDASGSEDDVF. The segment covering 1047 to 1071 has biased composition (basic and acidic residues); it reads SQSERRQSKMERLEKEGPGKKESQR. Phosphoserine is present on S1069. The segment covering 1072–1081 has biased composition (polar residues); it reads DTGGSISLQE. Acidic residues predominate over residues 1492–1524; it reads GDADEDEESEESSEEESSLESDEDASGSEDDVF. 2 coiled-coil regions span residues 1548 to 1603 and 1631 to 1665; these read RLDI…RLNE and LVFSNHSLDRLQERIVQLQEENAKQQKLNKECRER. The WD 10 repeat unit spans residues 1699 to 1744; that stretch reads IDLEALQTLSVNTTLEELKIKKLRKELSNAKELRMWEEKIAQVRWD.

Belongs to the CFAP44 family. In terms of tissue distribution, expressed in testis.

The protein localises to the cell projection. The protein resides in the cilium. It localises to the flagellum. Its subcellular location is the cytoplasm. It is found in the cytoskeleton. The protein localises to the flagellum axoneme. Flagellar protein involved in sperm flagellum axoneme organization and function. The sequence is that of Cilia- and flagella-associated protein 44 from Mus musculus (Mouse).